Here is a 2238-residue protein sequence, read N- to C-terminus: RNA-directed RNA polymerase L (2238 aa).

An endonuclease region spans residues 26–284; sequence ITLVTCQNDA…THHSEHPVDC (259 aa). 3 residues coordinate Mn(2+): Glu-51, Asp-89, and Glu-102. Lys-115 is an active-site residue. Residues 1188–1387 enclose the RdRp catalytic domain; sequence TDMKMCVNLG…FISTKFNKFV (200 aa). Residue Asp-1346 coordinates Mg(2+).

This sequence belongs to the Bunyavirales RNA polymerase family. As to quaternary structure, homomultimer; the oligomeric structure is essential for the polymerase activity. Interacts with nucleoprotein N. Interacts with protein Z; this interaction inhibits viral transcription and replication, Z partially blocks the product exit tunnel for the releasing nascent RNA product. Requires Mn(2+) as cofactor. Mg(2+) is required as a cofactor.

It is found in the virion. Its subcellular location is the host cytoplasm. The catalysed reaction is RNA(n) + a ribonucleoside 5'-triphosphate = RNA(n+1) + diphosphate. In terms of biological role, RNA-dependent RNA polymerase, which is responsible for the replication and transcription of the viral RNA genome using antigenomic RNA as an intermediate. During transcription, synthesizes subgenomic RNAs and assures their capping by a cap-snatching mechanism, which involves the endonuclease activity cleaving the host capped pre-mRNAs. These short capped RNAs are then used as primers for viral transcription. The 3'-end of subgenomic mRNAs molecules are heterogeneous and not polyadenylated. The replicase function is to direct synthesis of antigenomic and genomic RNA which are encapsidated and non capped. As a consequence of the use of the same enzyme for both transcription and replication, these mechanisms need to be well coordinated. These processes may be regulated by proteins N and Z in a dose-dependent manner. Z protein inhibits the viral polymerase L und thus the viral transcription and RNA synthesis. In Calomys callosus (Large vesper mouse), this protein is RNA-directed RNA polymerase L.